A 713-amino-acid polypeptide reads, in one-letter code: Ribosomal RNA large subunit methyltransferase K/L (713 aa).

One can recognise a THUMP domain in the interval 43-154; it reads LAYRITLWTR…NGVITIAMNF (112 aa).

Belongs to the methyltransferase superfamily. RlmKL family.

The protein localises to the cytoplasm. The catalysed reaction is guanosine(2445) in 23S rRNA + S-adenosyl-L-methionine = N(2)-methylguanosine(2445) in 23S rRNA + S-adenosyl-L-homocysteine + H(+). The enzyme catalyses guanosine(2069) in 23S rRNA + S-adenosyl-L-methionine = N(2)-methylguanosine(2069) in 23S rRNA + S-adenosyl-L-homocysteine + H(+). Functionally, specifically methylates the guanine in position 2445 (m2G2445) and the guanine in position 2069 (m7G2069) of 23S rRNA. This is Ribosomal RNA large subunit methyltransferase K/L from Shewanella sp. (strain MR-7).